The sequence spans 21 residues: Chlorophyllase type 2 (21 aa).

This sequence belongs to the AB hydrolase superfamily. Lipase family.

It carries out the reaction a chlorophyll + H2O = a chlorophyllide + phytol + H(+). It functions in the pathway porphyrin-containing compound metabolism; chlorophyll degradation. Catalyzes the hydrolysis of ester bond in chlorophyll to yield chlorophyllide and phytol. In Chenopodium album (Fat hen), this protein is Chlorophyllase type 2.